The chain runs to 94 residues: MSRPRIGAAAAITQLEGWAIAPNHKDAIVKTFRFDDFNQAFGFMTRVALMADKLDHHPEWFNVYNRVEVLLTTHDADGVTDLDLTLAKFMDSAA.

The protein belongs to the pterin-4-alpha-carbinolamine dehydratase family.

The enzyme catalyses (4aS,6R)-4a-hydroxy-L-erythro-5,6,7,8-tetrahydrobiopterin = (6R)-L-erythro-6,7-dihydrobiopterin + H2O. The chain is Putative pterin-4-alpha-carbinolamine dehydratase from Caulobacter vibrioides (strain ATCC 19089 / CIP 103742 / CB 15) (Caulobacter crescentus).